The sequence spans 213 residues: Macrodontain-1 (213 aa).

3 disulfide bridges follow: Cys23-Cys63, Cys57-Cys96, and Cys153-Cys201. Cys26 is a catalytic residue. Residues His159 and Asn176 contribute to the active site.

In terms of assembly, monomer. In terms of tissue distribution, fruits.

With respect to regulation, inhibited by the general cysteine protease inhibitor E64 (L-trans-epoxysuccinyl-leucylamide-(4-guanido)-butane). Its function is as follows. Cysteine protease that catalyzes the preferential cleavage: Ala-|-Xaa &gt; Gln-|-Xaa &gt; Tyr-Xaa &gt;&gt; Leu-|-Xaa &gt; Gly-|-Xaa. Hydrolyzes the synthetic peptide substrate Bz-Phe-Val-Arg-pNA. The protein is Macrodontain-1 of Ananas macrodontes (False pineapple).